The chain runs to 318 residues: N-acetyl-gamma-glutamyl-phosphate reductase (318 aa).

C132 is an active-site residue.

It belongs to the NAGSA dehydrogenase family. Type 1 subfamily.

It localises to the cytoplasm. The catalysed reaction is N-acetyl-L-glutamate 5-semialdehyde + phosphate + NADP(+) = N-acetyl-L-glutamyl 5-phosphate + NADPH + H(+). Its pathway is amino-acid biosynthesis; L-arginine biosynthesis; N(2)-acetyl-L-ornithine from L-glutamate: step 3/4. Catalyzes the NADPH-dependent reduction of N-acetyl-5-glutamyl phosphate to yield N-acetyl-L-glutamate 5-semialdehyde. This Azobacteroides pseudotrichonymphae genomovar. CFP2 protein is N-acetyl-gamma-glutamyl-phosphate reductase.